Consider the following 361-residue polypeptide: POU domain, class 3, transcription factor 4 (361 aa).

Disordered stretches follow at residues 99-131 and 144-192; these read PHVA…GQPL and MLEH…PTSD. Residues 122-131 are compositionally biased toward polar residues; sequence PSITSSGQPL. Residues 165 to 183 are compositionally biased toward basic and acidic residues; sequence VLREPPDHGELGSHHCQDH. One can recognise a POU-specific domain in the interval 186 to 260; it reads EETPTSDELE…LLNKWLEEAD (75 aa). S265 bears the Phosphoserine mark. The homeobox DNA-binding region spans 278 to 337; it reads KRKKRTSIEVSVKGVLETHFLKCPKPAAQEISSLADSLQLEKEVVRVWFCNRRQKEKRMT.

It belongs to the POU transcription factor family. Class-3 subfamily. Interacts with HNRNPU. In terms of tissue distribution, brain specific.

Its subcellular location is the nucleus. Functionally, probable transcription factor which exert its primary action widely during early neural development and in a very limited set of neurons in the mature brain. The protein is POU domain, class 3, transcription factor 4 (POU3F4) of Homo sapiens (Human).